Reading from the N-terminus, the 726-residue chain is Sensory/regulatory protein RpfC (726 aa).

Residues 1-22 (MKSPLPWLKRRLSGRADSEHAQ) are Periplasmic-facing. Residues 1–22 (MKSPLPWLKRRLSGRADSEHAQ) form a sensor region. Residues 23–40 (NLIRIIITTLFISYLGWR) form a helical membrane-spanning segment. Residues 41–51 (YQHTHGDTLMA) are Cytoplasmic-facing. A helical membrane pass occupies residues 52-72 (TWLILVGELLVSLGLMVAILL). Over 73-94 (RPQVSHTRRLIGMLLDYTCTGA) the chain is Periplasmic. A helical transmembrane segment spans residues 95–115 (IMAIQGEPASPLYAVCMWVTI). Residues 116-127 (GNGLRYGSNYLR) lie on the Cytoplasmic side of the membrane. A helical membrane pass occupies residues 128–148 (AATAMGSLCFLGAILISPYWK). Over 149-151 (ANP) the chain is Periplasmic. Residues 152–172 (YLSWGLLLGLIAVPLYFDSLL) traverse the membrane as a helical segment. The Cytoplasmic segment spans residues 173 to 726 (RAMTRAVREA…DGECSPRSNE (554 aa)). A Histidine kinase domain is found at 195–417 (NMSHEFRTPL…VFWFELPMAI (223 aa)). Position 198 is a phosphohistidine; by autocatalysis (His198). One can recognise a Response regulatory domain in the interval 463 to 581 (RMLVADDHEA…KLLDTLADLA (119 aa)). At Asp512 the chain carries 4-aspartylphosphate. One can recognise an HPt domain in the interval 618–711 (GEEFERQFVR…KAGKDALDAR (94 aa)). His657 bears the Phosphohistidine mark.

In terms of assembly, at low DSF concentrations, interacts with RpfF. Autophosphorylated. Activation may require a sequential transfer of a phosphate group from a His in the primary transmitter domain, to an Asp in the receiver domain and to a His in the secondary transmitter domain.

It localises to the cell inner membrane. The catalysed reaction is ATP + protein L-histidine = ADP + protein N-phospho-L-histidine.. Its activity is regulated as follows. Binding of DSF to the sensor region causes allosteric change, which facilitates RpfC autophosphorylation. Functionally, hybrid sensor kinase that regulates diverse biological functions through two distinct molecular mechanisms. At low cell density, the extracellular concentration of the diffusible signaling factor (DSF) is below a threshold, and unphosphorylated RpfC is involved in the negative regulation of DSF synthesis, via direct interaction with the DSF synthase RpfF. Interaction prevents synthesis of DSF, which remains at a basal level. This activity does not involve the phosphorelay mechanism and is not dependent on RpfG. Is also member of the two-component regulatory system RpfG/RpfC, which is involved in the perception and response to DSF, which is essential for cell-cell signaling. At high cell density, the level of extracellular DSF increases and binding of DSF to the sensor region of RpfC causes autophosphorylation of RpfC, which results in the release of RpfF and the activation of RpfG via a four-step phosphorelay. Activation of RpfG leads to the positive regulation of biofilm dispersal and the production of virulence factors. This Xanthomonas campestris pv. campestris (strain 8004) protein is Sensory/regulatory protein RpfC (rpfC).